Consider the following 405-residue polypeptide: Cytoplasmic 60S subunit biogenesis factor ZNF622 (405 aa).

2 U1-type zinc fingers span residues 4-28 and 67-91; these read YTCI…TDWH and TYCT…SKKH. Residues 135–230 form a disordered region; it reads AIRAQPSSSP…GVEEEEEKQA (96 aa). Residues 194-228 are compositionally biased toward acidic residues; the sequence is AEEEEDSEEGWEEMDSDEDLGSEEEMEGVEEEEEK.

It belongs to the REI1 family. As to quaternary structure, homo- and heterodimer. Associates with pre-60S ribosomal particles. Mainly expressed in the ovary. As to expression, mainly expressed in the testis.

Its subcellular location is the cytoplasm. The protein resides in the nucleus. In terms of biological role, pre-60S-associated cytoplasmic factor involved in the cytoplasmic maturation of the 60S subunit. This Gallus gallus (Chicken) protein is Cytoplasmic 60S subunit biogenesis factor ZNF622 (ZNF622).